Consider the following 339-residue polypeptide: STEAP1 protein (339 aa).

The next 2 membrane-spanning stretches (helical) occupy residues 71-91 (WHLP…YTLL) and 119-139 (PMVS…AAIV). A Ferric oxidoreductase domain is found at 118–265 (LPMVSITLLA…KLGIVSLLLG (148 aa)). Residues Gln140 and Arg161 each coordinate FAD. 2 helical membrane-spanning segments follow: residues 164–184 (FGLL…SYPM) and 218–238 (IYVS…VTSI). His175 is a binding site for heme b. The FAD site is built by Ser237 and Gln254. The next 2 membrane-spanning stretches (helical) occupy residues 258–278 (GIVS…NKWI) and 291–311 (FMIA…LFLP). His268 contributes to the heme b binding site.

This sequence belongs to the STEAP family. In terms of assembly, homotrimer. The cofactor is FAD. Heme b serves as cofactor. In terms of tissue distribution, ubiquitously expressed. Highly expressed in prostate tumors.

It is found in the endosome membrane. Its subcellular location is the cell membrane. Does not function as a metalloreductase due to the absence of binding sites for the electron-donating substrate NADPH. Promotes Fe(3+) reduction when fused to the NADPH-binding domain of STEAP4. The protein is STEAP1 protein (STEAP1) of Homo sapiens (Human).